Reading from the N-terminus, the 87-residue chain is Antitoxin RelB1 (87 aa).

In terms of biological role, antitoxin component of a type II toxin-antitoxin (TA) system. Neutralizes the effect of cognate toxin RelE1, but no other RelE or ParE toxin. The chain is Antitoxin RelB1 (relB1) from Caulobacter vibrioides (strain ATCC 19089 / CIP 103742 / CB 15) (Caulobacter crescentus).